A 232-amino-acid chain; its full sequence is MTQEILEDVNPTRMELLKLQDRIELAKKGHKLLKEKRDALIMEFFEMVKRASEIREQAVKKLMEAYSKLAAAKVTVGEIGVERASMATGEEIKVDVGSRNVMGVVVPIIERVSEDGGSKVVYGFADTSGALDEAMRAFTEAIDAVLELAEIEETLRLMAEEIERTKRRVNALEHIVIPRLENTEKYIEMKLDEQERENFVRLKRVKDLIERKKLKEELERVVEEGAELPSFE.

Belongs to the V-ATPase D subunit family. As to quaternary structure, has multiple subunits with at least A(3), B(3), C, D, E, F, H, I and proteolipid K(x).

It is found in the cell membrane. Its function is as follows. Component of the A-type ATP synthase that produces ATP from ADP in the presence of a proton gradient across the membrane. This Methanopyrus kandleri (strain AV19 / DSM 6324 / JCM 9639 / NBRC 100938) protein is A-type ATP synthase subunit D.